Here is a 529-residue protein sequence, read N- to C-terminus: MQQRRPVRRALLSVSDKAGIIEFAQALSARGVELLSTGGTARLLAEKGLPVTEVSDYTGFPEMMDGRVKTLHPKVHGGILGRRGQDDAIMEQHHIAPIDMVVVNLYPFAETVAREGCSLADAVENIDIGGPTMVRSAAKNHKDVAIVVKSSDYDAIIKEMDANEGSLTLDTRFDLAIKAFEHTAAYDSMIANYFGSMVPAYHGESKEAAGRFPRTLNLNFIKKQDMRYGENSHQQAAFYIEENVKEASVATAQQIQGKALSYNNIADTDAALECVKEFNEPACVIVKHANPCGVAVSTSILDAYDRAYKTDPTSAFGGIIAFNRELDAETAQAIISRQFVEVLIAPSASEEALKITSAKQNVRVLTCGQWASRVPGLDFKRVNGGLLVQDRDLGMVSEAELRVVSKRQPTEQELRDALFCWKVAKFVKSNAIVYAKENMTIGIGAGQMSRVYSAKIASIKAADEGLEVKGSAMASDAFFPFRDGIDAAAAVGVSCVIQPGGSIRDDEVIAAADEHGIAMIFTDMRHFRH.

Residues 1 to 148 (MQQRRPVRRA…KNHKDVAIVV (148 aa)) enclose the MGS-like domain.

This sequence belongs to the PurH family.

It carries out the reaction (6R)-10-formyltetrahydrofolate + 5-amino-1-(5-phospho-beta-D-ribosyl)imidazole-4-carboxamide = 5-formamido-1-(5-phospho-D-ribosyl)imidazole-4-carboxamide + (6S)-5,6,7,8-tetrahydrofolate. The enzyme catalyses IMP + H2O = 5-formamido-1-(5-phospho-D-ribosyl)imidazole-4-carboxamide. It participates in purine metabolism; IMP biosynthesis via de novo pathway; 5-formamido-1-(5-phospho-D-ribosyl)imidazole-4-carboxamide from 5-amino-1-(5-phospho-D-ribosyl)imidazole-4-carboxamide (10-formyl THF route): step 1/1. The protein operates within purine metabolism; IMP biosynthesis via de novo pathway; IMP from 5-formamido-1-(5-phospho-D-ribosyl)imidazole-4-carboxamide: step 1/1. This chain is Bifunctional purine biosynthesis protein PurH, found in Salmonella typhi.